The chain runs to 346 residues: [LysW]-lysine/[LysW]-ornithine hydrolase (346 aa).

His-68 lines the Zn(2+) pocket. Asp-70 is an active-site residue. Residue Asp-92 participates in Zn(2+) binding. Glu-122 acts as the Proton acceptor in catalysis. Glu-123, Glu-146, and His-317 together coordinate Zn(2+).

This sequence belongs to the peptidase M20A family. LysK subfamily. Zn(2+) is required as a cofactor. It depends on Co(2+) as a cofactor.

It is found in the cytoplasm. It catalyses the reaction [amino-group carrier protein]-C-terminal-gamma-(L-lysyl)-L-glutamate + H2O = [amino-group carrier protein]-C-terminal-L-glutamate + L-lysine. The enzyme catalyses [amino-group carrier protein]-C-terminal-gamma-(L-ornithyl)-L-glutamate + H2O = [amino-group carrier protein]-C-terminal-L-glutamate + L-ornithine. Its pathway is amino-acid biosynthesis; L-lysine biosynthesis via AAA pathway; L-lysine from L-alpha-aminoadipate (Thermus route): step 5/5. It functions in the pathway amino-acid biosynthesis; L-arginine biosynthesis. Its function is as follows. Catalyzes the release of L-lysine from [LysW]-gamma-L-lysine and the release of L-ornithine from [LysW]-L-ornithine. This Saccharolobus islandicus (strain Y.N.15.51 / Yellowstone #2) (Sulfolobus islandicus) protein is [LysW]-lysine/[LysW]-ornithine hydrolase.